The following is a 162-amino-acid chain: Phospholipase A and acyltransferase 3 (162 aa).

At 1–133 the chain is on the cytoplasmic side; that stretch reads MLAPIPEPKP…VPRSDQVRDA (133 aa). The 117-residue stretch at 13-129 folds into the LRAT domain; it reads LIEIFRPMYR…LRYGVPRSDQ (117 aa). Active-site residues include His-23 and His-35. The Acyl-thioester intermediate role is filled by Cys-113. The helical transmembrane segment at 134-154 threads the bilayer; the sequence is VKAVGIAGVGLAALGLVGVML. The Lumenal portion of the chain corresponds to 155 to 162; that stretch reads SRNKKQKQ.

Belongs to the H-rev107 family. As to quaternary structure, interacts with PPP2R1A; this interaction might decrease PP2A activity. In terms of tissue distribution, ubiquitously expressed in normal tissues but down-regulated in primary carcinomas or in many cell lines derived from tumors. Highly expressed in white adipose tissue and in adipocytes. Expressed at lower levels in brown adipose tissue.

Its subcellular location is the cell membrane. It localises to the cytoplasm. The protein localises to the cytosol. It is found in the perinuclear region. The protein resides in the peroxisome membrane. Its subcellular location is the mitochondrion membrane. It localises to the nucleus envelope. The protein localises to the lysosome membrane. It is found in the endoplasmic reticulum membrane. The enzyme catalyses a 1,2-diacyl-sn-glycero-3-phosphocholine + H2O = a 1-acyl-sn-glycero-3-phosphocholine + a fatty acid + H(+). It carries out the reaction a 1,2-diacyl-sn-glycero-3-phosphocholine + H2O = a 2-acyl-sn-glycero-3-phosphocholine + a fatty acid + H(+). It catalyses the reaction 1,2-dihexadecanoyl-sn-glycero-3-phosphocholine + H2O = 1-hexadecanoyl-sn-glycero-3-phosphocholine + hexadecanoate + H(+). The catalysed reaction is 1,2-dihexadecanoyl-sn-glycero-3-phosphocholine + H2O = 2-hexadecanoyl-sn-glycero-3-phosphocholine + hexadecanoate + H(+). The enzyme catalyses 1-hexadecanoyl-2-(9Z-octadecenoyl)-sn-glycero-3-phosphocholine + H2O = 2-(9Z-octadecenoyl)-sn-glycero-3-phosphocholine + hexadecanoate + H(+). It carries out the reaction 1-hexadecanoyl-2-(9Z-octadecenoyl)-sn-glycero-3-phosphocholine + H2O = 1-hexadecanoyl-sn-glycero-3-phosphocholine + (9Z)-octadecenoate + H(+). It catalyses the reaction 1-hexadecanoyl-2-(5Z,8Z,11Z,14Z-eicosatetraenoyl)-sn-glycero-3-phosphocholine + H2O = 1-hexadecanoyl-sn-glycero-3-phosphocholine + (5Z,8Z,11Z,14Z)-eicosatetraenoate + H(+). The catalysed reaction is 1-hexadecanoyl-2-(5Z,8Z,11Z,14Z-eicosatetraenoyl)-sn-glycero-3-phosphocholine + H2O = 2-(5Z,8Z,11Z,14Z)-eicosatetraenoyl-sn-glycero-3-phosphocholine + hexadecanoate + H(+). The enzyme catalyses 1-hexadecanoyl-2-(9Z,12Z-octadecadienoyl)-sn-glycero-3-phosphoethanolamine + H2O = 1-hexadecanoyl-sn-glycero-3-phosphoethanolamine + (9Z,12Z)-octadecadienoate + H(+). It carries out the reaction 1-hexadecanoyl-2-(9Z,12Z-octadecadienoyl)-sn-glycero-3-phosphoethanolamine + H2O = 2-(9Z,12Z)-octadecadienoyl-sn-glycero-3-phosphoethanolamine + hexadecanoate + H(+). It catalyses the reaction 1-hexadecanoyl-2-(5Z,8Z,11Z,14Z-eicosatetraenoyl)-sn-glycero-3-phosphoethanolamine + H2O = 1-hexadecanoyl-sn-glycero-3-phosphoethanolamine + (5Z,8Z,11Z,14Z)-eicosatetraenoate + H(+). The catalysed reaction is 1-hexadecanoyl-2-(5Z,8Z,11Z,14Z-eicosatetraenoyl)-sn-glycero-3-phosphoethanolamine + H2O = 2-(5Z,8Z,11Z,14Z)-eicosatetraenoyl-sn-glycero-3-phosphoethanolamine + hexadecanoate + H(+). The enzyme catalyses 1-hexanoyl-2-acyl-sn-glycero-3-phosphocholine + H2O = hexanoate + a 2-acyl-sn-glycero-3-phosphocholine + H(+). It carries out the reaction 1-hexanoyl-2-acyl-sn-glycero-3-phosphocholine + H2O = 1-hexanoyl-sn-glycero-3-phosphocholine + a fatty acid + H(+). It catalyses the reaction 1,2-diheptadecanoyl-sn-glycero-3-phosphoethanolamine + 1-(9Z-octadecenoyl)-2-hexadecanoyl-sn-glycero-3-phosphocholine = 1,2-diheptadecanoyl-sn-glycero-3-phospho-N-hexadecanoyl-ethanolamine + 1-(9Z-octadecenoyl)-sn-glycero-3-phosphocholine + H(+). The catalysed reaction is 1,2-diheptadecanoyl-sn-glycero-3-phosphoethanolamine + 1-(9Z-octadecenoyl)-2-hexadecanoyl-sn-glycero-3-phosphocholine = 1,2-diheptadecanoyl-sn-glycero-3-phospho-N-(9Z-octadecenoyl)-ethanolamine + 2-hexadecanoyl-sn-glycero-3-phosphocholine + H(+). The enzyme catalyses 1,2-dihexanoyl-sn-glycero-3-phosphoethanolamine + 2-heptanoyl-sn-glycero-3-phosphocholine = hexanoyl-sn-glycero-3-phosphoethanolamine + 1-hexanoyl-2-heptanoyl-sn-glycero-3-phosphocholine. It carries out the reaction 1-hexadecanoyl-2-octadecanoyl-sn-glycero-3-phosphocholine + H2O = octadecanoate + 1-hexadecanoyl-sn-glycero-3-phosphocholine + H(+). It catalyses the reaction 1-hexadecanoyl-2-octadecanoyl-sn-glycero-3-phosphocholine + H2O = 2-octadecanoyl-sn-glycero-3-phosphocholine + hexadecanoate + H(+). The catalysed reaction is 1-octadecanoyl-2-hexadecanoyl-sn-glycero-3-phosphocholine + H2O = 1-octadecanoyl-sn-glycero-3-phosphocholine + hexadecanoate + H(+). The enzyme catalyses 1-octadecanoyl-2-hexadecanoyl-sn-glycero-3-phosphocholine + H2O = 2-hexadecanoyl-sn-glycero-3-phosphocholine + octadecanoate + H(+). It carries out the reaction 1-hexadecanoyl-2-(9Z,12Z-octadecadienoyl)-sn-glycero-3-phosphocholine + H2O = (9Z,12Z)-octadecadienoate + 1-hexadecanoyl-sn-glycero-3-phosphocholine + H(+). It catalyses the reaction 1-hexadecanoyl-2-(9Z,12Z-octadecadienoyl)-sn-glycero-3-phosphocholine + H2O = 2-(9Z,12Z-octadecadienoyl)-sn-glycero-3-phosphocholine + hexadecanoate + H(+). The catalysed reaction is 1,2-di-(9Z-octadecenoyl)-sn-glycero-3-phosphocholine + H2O = 2-(9Z-octadecenoyl)-sn-glycero-3-phosphocholine + (9Z)-octadecenoate + H(+). The enzyme catalyses 1,2-dihexadecanoyl-sn-glycero-3-phosphocholine + H2O = hexadecanoyl-sn-glycero-3-phosphocholine + hexadecanoate + H(+). It carries out the reaction 1,2-di-(9Z-octadecenoyl)-sn-glycero-3-phosphocholine + H2O = 1-(9Z-octadecenoyl)-sn-glycero-3-phosphocholine + (9Z)-octadecenoate + H(+). It catalyses the reaction 1,2-di-(9Z-octadecenoyl)-sn-glycero-3-phosphoethanolamine + 1,2-dihexadecanoyl-sn-glycero-3-phosphocholine = hexadecanoyl-sn-glycero-3-phosphocholine + N-hexadecanoyl-1,2-di-(9Z-octadecenoyl)-sn-glycero-3-phosphoethanolamine + H(+). The catalysed reaction is 1,2-di-(9Z,12Z-octadecadienoyl)-sn-glycero-3-phosphocholine + H2O = 1-(9Z,12Z)-octadecadienoyl-sn-glycero-3-phosphocholine + (9Z,12Z)-octadecadienoate + H(+). In terms of biological role, exhibits both phospholipase A1/2 and acyltransferase activities. Shows phospholipase A1 (PLA1) and A2 (PLA2), catalyzing the calcium-independent release of fatty acids from the sn-1 or sn-2 position of glycerophospholipids. For most substrates, PLA1 activity is much higher than PLA2 activity. Shows O-acyltransferase activity, catalyzing the transfer of a fatty acyl group from glycerophospholipid to the hydroxyl group of lysophospholipid. Shows N-acyltransferase activity,catalyzing the calcium-independent transfer of a fatty acyl group at the sn-1 position of phosphatidylcholine (PC) and other glycerophospholipids to the primary amine of phosphatidylethanolamine (PE), forming N-acylphosphatidylethanolamine (NAPE), which serves as precursor for N-acylethanolamines (NAEs). Exhibits high N-acyltransferase activity and low phospholipase A1/2 activity. Required for complete organelle rupture and degradation that occur during eye lens terminal differentiation, when fiber cells that compose the lens degrade all membrane-bound organelles in order to provide lens with transparency to allow the passage of light. Organelle membrane degradation is probably catalyzed by the phospholipase activity. (Microbial infection) Acts as a host factor for picornaviruses: required during early infection to promote viral genome release into the cytoplasm. This Mus musculus (Mouse) protein is Phospholipase A and acyltransferase 3.